The primary structure comprises 438 residues: ATP synthase subunit alpha, chloroplastic (438 aa).

170 to 177 (GDRQTGKT) serves as a coordination point for ATP.

This sequence belongs to the ATPase alpha/beta chains family. As to quaternary structure, F-type ATPases have 2 components, CF(1) - the catalytic core - and CF(0) - the membrane proton channel. CF(1) has five subunits: alpha(3), beta(3), gamma(1), delta(1), epsilon(1). CF(0) has four main subunits: a, b, b' and c.

The protein localises to the plastid. The protein resides in the chloroplast thylakoid membrane. It carries out the reaction ATP + H2O + 4 H(+)(in) = ADP + phosphate + 5 H(+)(out). Produces ATP from ADP in the presence of a proton gradient across the membrane. The alpha chain is a regulatory subunit. The sequence is that of ATP synthase subunit alpha, chloroplastic from Ochrosphaera neapolitana.